The primary structure comprises 267 residues: Probable aquaporin TIP3-2 (267 aa).

An N-acetylmethionine modification is found at methionine 1. N-acetylalanine; in Probable aquaporin TIP3-2, N-terminally processed is present on alanine 2. Over 2 to 26 (ATSARRAYGFGRADEATHPDSIRAT) the chain is Cytoplasmic. Residues 27-47 (LAEFLSTFVFVFAGEGSILAL) traverse the membrane as a helical segment. Residues 48–66 (DKLYWDTAAHTGTNTPGGL) lie on the Vacuolar side of the membrane. The helical transmembrane segment at 67–87 (VLVALAHALALFAAVSAAINV) threads the bilayer. Residues 88-110 (SGGHVNPAVTFAALIGGRISVIR) are Cytoplasmic-facing. The short motif at 93-95 (NPA) is the NPA 1 element. A helical transmembrane segment spans residues 111–131 (AIYYWVAQLIGAILACLLLRL). The Vacuolar portion of the chain corresponds to 132 to 151 (ATNGLRPVGFHVASGVSELH). A helical transmembrane segment spans residues 152–172 (GLLMEIILTFALVYVVYSTAI). Over 173 to 178 (DPKRGS) the chain is Cytoplasmic. A helical membrane pass occupies residues 179-199 (IGIIAPLAIGLIVGANILVGG). At 200–226 (PFDGASMNPARAFGPALVGWRWSNHWI) the chain is on the vacuolar side. The NPA 2 motif lies at 207–209 (NPA). A helical transmembrane segment spans residues 227–247 (YWVGPFIGGALAALIYEYMII). Over 248–267 (PSVNEPPHHSTHQPLAPEDY) the chain is Cytoplasmic.

This sequence belongs to the MIP/aquaporin (TC 1.A.8) family. TIP (TC 1.A.8.10) subfamily. As to expression, predominantly expressed in developing seeds. Also expressed in rosette leaves.

The protein localises to the vacuole membrane. Functionally, aquaporins facilitate the transport of water and small neutral solutes across cell membranes. This is Probable aquaporin TIP3-2 (TIP3-2) from Arabidopsis thaliana (Mouse-ear cress).